The sequence spans 452 residues: Exodeoxyribonuclease 7 large subunit (452 aa).

Belongs to the XseA family. In terms of assembly, heterooligomer composed of large and small subunits.

Its subcellular location is the cytoplasm. It catalyses the reaction Exonucleolytic cleavage in either 5'- to 3'- or 3'- to 5'-direction to yield nucleoside 5'-phosphates.. In terms of biological role, bidirectionally degrades single-stranded DNA into large acid-insoluble oligonucleotides, which are then degraded further into small acid-soluble oligonucleotides. The sequence is that of Exodeoxyribonuclease 7 large subunit from Bacillus cereus (strain ATCC 10987 / NRS 248).